Reading from the N-terminus, the 251-residue chain is Probable transcriptional regulatory protein DET0444 (251 aa).

The protein belongs to the TACO1 family.

The protein resides in the cytoplasm. In Dehalococcoides mccartyi (strain ATCC BAA-2266 / KCTC 15142 / 195) (Dehalococcoides ethenogenes (strain 195)), this protein is Probable transcriptional regulatory protein DET0444.